Reading from the N-terminus, the 303-residue chain is Ribosomal protein L11 methyltransferase (303 aa).

Positions 144, 165, 187, and 235 each coordinate S-adenosyl-L-methionine.

This sequence belongs to the methyltransferase superfamily. PrmA family.

The protein resides in the cytoplasm. The catalysed reaction is L-lysyl-[protein] + 3 S-adenosyl-L-methionine = N(6),N(6),N(6)-trimethyl-L-lysyl-[protein] + 3 S-adenosyl-L-homocysteine + 3 H(+). Methylates ribosomal protein L11. The chain is Ribosomal protein L11 methyltransferase from Prochlorococcus marinus (strain MIT 9301).